The primary structure comprises 176 residues: Inorganic pyrophosphatase (176 aa).

3 residues coordinate substrate: lysine 31, arginine 45, and tyrosine 57. Mg(2+) is bound by residues aspartate 67, aspartate 72, and aspartate 104. Tyrosine 142 serves as a coordination point for substrate.

This sequence belongs to the PPase family. In terms of assembly, homohexamer. The cofactor is Mg(2+).

The protein resides in the cytoplasm. The catalysed reaction is diphosphate + H2O = 2 phosphate + H(+). In terms of biological role, catalyzes the hydrolysis of inorganic pyrophosphate (PPi) forming two phosphate ions. This chain is Inorganic pyrophosphatase, found in Haemophilus influenzae (strain ATCC 51907 / DSM 11121 / KW20 / Rd).